The chain runs to 310 residues: tRNA dimethylallyltransferase (310 aa).

13 to 20 (GPTASGKT) is an ATP binding site. 15–20 (TASGKT) contacts substrate. 4 interaction with substrate tRNA regions span residues 38-41 (DSAL), 162-166 (QRLSR), 243-248 (RCVGYR), and 276-283 (KRQITWLR).

The protein belongs to the IPP transferase family. As to quaternary structure, monomer. Mg(2+) serves as cofactor.

It carries out the reaction adenosine(37) in tRNA + dimethylallyl diphosphate = N(6)-dimethylallyladenosine(37) in tRNA + diphosphate. Functionally, catalyzes the transfer of a dimethylallyl group onto the adenine at position 37 in tRNAs that read codons beginning with uridine, leading to the formation of N6-(dimethylallyl)adenosine (i(6)A). The polypeptide is tRNA dimethylallyltransferase (Aliivibrio fischeri (strain MJ11) (Vibrio fischeri)).